Here is a 418-residue protein sequence, read N- to C-terminus: L-rhamnose isomerase (418 aa).

Mn(2+) is bound by residues H262, D294, and D296.

The protein belongs to the rhamnose isomerase family. As to quaternary structure, homotetramer. Mn(2+) serves as cofactor.

The protein resides in the cytoplasm. It carries out the reaction L-rhamnopyranose = L-rhamnulose. The protein operates within carbohydrate degradation; L-rhamnose degradation; glycerone phosphate from L-rhamnose: step 1/3. Catalyzes the interconversion of L-rhamnose and L-rhamnulose. This is L-rhamnose isomerase from Yersinia pseudotuberculosis serotype O:1b (strain IP 31758).